A 45-amino-acid polypeptide reads, in one-letter code: Ribosome-inactivating protein TAP-29 (45 aa).

It belongs to the ribosome-inactivating protein family. Type 1 RIP subfamily.

It catalyses the reaction Endohydrolysis of the N-glycosidic bond at one specific adenosine on the 28S rRNA.. Capable of inhibiting HIV-1 infection and replication. It inactivates eukaryotic 60S ribosomal subunits. The polypeptide is Ribosome-inactivating protein TAP-29 (Trichosanthes kirilowii (Chinese snake gourd)).